A 109-amino-acid polypeptide reads, in one-letter code: Large ribosomal subunit protein uL24 (109 aa).

This sequence belongs to the universal ribosomal protein uL24 family. In terms of assembly, part of the 50S ribosomal subunit.

Functionally, one of two assembly initiator proteins, it binds directly to the 5'-end of the 23S rRNA, where it nucleates assembly of the 50S subunit. One of the proteins that surrounds the polypeptide exit tunnel on the outside of the subunit. This chain is Large ribosomal subunit protein uL24, found in Syntrophobacter fumaroxidans (strain DSM 10017 / MPOB).